The chain runs to 356 residues: Phenylalanine--tRNA ligase alpha subunit (356 aa).

Glutamate 258 provides a ligand contact to Mg(2+).

Belongs to the class-II aminoacyl-tRNA synthetase family. Phe-tRNA synthetase alpha subunit type 1 subfamily. In terms of assembly, tetramer of two alpha and two beta subunits. Requires Mg(2+) as cofactor.

It is found in the cytoplasm. The catalysed reaction is tRNA(Phe) + L-phenylalanine + ATP = L-phenylalanyl-tRNA(Phe) + AMP + diphosphate + H(+). The sequence is that of Phenylalanine--tRNA ligase alpha subunit from Macrococcus caseolyticus (strain JCSC5402) (Macrococcoides caseolyticum).